A 172-amino-acid polypeptide reads, in one-letter code: Shikimate kinase 2 (172 aa).

Position 9–16 (9–16 (GARAAGKT)) interacts with ATP.

This sequence belongs to the shikimate kinase family.

Its subcellular location is the cytoplasm. The enzyme catalyses shikimate + ATP = 3-phosphoshikimate + ADP + H(+). It functions in the pathway metabolic intermediate biosynthesis; chorismate biosynthesis; chorismate from D-erythrose 4-phosphate and phosphoenolpyruvate: step 5/7. The polypeptide is Shikimate kinase 2 (Syntrophotalea carbinolica (strain DSM 2380 / NBRC 103641 / GraBd1) (Pelobacter carbinolicus)).